Here is a 414-residue protein sequence, read N- to C-terminus: Alanine--glyoxylate aminotransferase (414 aa).

The N-terminal 23 residues, methionine 1–methionine 23, are a transit peptide targeting the mitochondrion. An N6-(pyridoxal phosphate)lysine modification is found at lysine 231. Lysine 247 carries the N6-acetyllysine; alternate modification. N6-succinyllysine; alternate is present on lysine 247. Lysine 256 bears the N6-acetyllysine mark. Lysine 330 carries the N6-acetyllysine; alternate modification. An N6-succinyllysine; alternate modification is found at lysine 330. Lysine 334 carries the N6-acetyllysine modification. Arginine 382 lines the substrate pocket. A Microbody targeting signal motif is present at residues asparagine 412–leucine 414.

The protein belongs to the class-V pyridoxal-phosphate-dependent aminotransferase family. In terms of assembly, homodimer. It depends on pyridoxal 5'-phosphate as a cofactor.

It is found in the peroxisome. The protein resides in the mitochondrion matrix. The enzyme catalyses L-serine + pyruvate = 3-hydroxypyruvate + L-alanine. It catalyses the reaction glyoxylate + L-alanine = glycine + pyruvate. Functionally, catalyzes the transamination of glyoxylate to glycine and contributes to the glyoxylate detoxification. Its function is as follows. Catalyzes the transamination between L-serine and pyruvate and weakly contributes to gluconeogenesis from the L-serine metabolism. The polypeptide is Alanine--glyoxylate aminotransferase (Mus musculus (Mouse)).